The chain runs to 851 residues: Phosphatidate phosphatase LPIN3 (851 aa).

The N-LIP stretch occupies residues 1–108 (MNYVGQLAET…VPPGLCTSPI (108 aa)). Disordered regions lie at residues 114–385 (SGFP…YLDD) and 400–432 (QSDSGLGARRWSEPSSQKSLRDPNPEHEPEPTL). Residues 140-151 (GRRKRRRRRKPK) show a composition bias toward basic residues. The Nuclear localization signal signature appears at 141-148 (RRKRRRRR). Residue Thr159 is modified to Phosphothreonine. 3 positions are modified to phosphoserine: Ser161, Ser162, and Ser224. Low complexity predominate over residues 268 to 286 (GRAGATSPPRGGPSTPSTS). Positions 418–429 (SLRDPNPEHEPE) are enriched in basic and acidic residues. Ser463 bears the Phosphoserine mark. Residues 542-559 (SAQKEKTAAKEQQGEKTE) show a composition bias toward basic and acidic residues. The tract at residues 542 to 591 (SAQKEKTAAKEQQGEKTEVLSSDDDAPDSPVILEIPSLPPSTPPSTPTYK) is disordered. The span at 578 to 587 (SLPPSTPPST) shows a compositional bias: pro residues. Residues 590–792 (YKKSLRLSSD…RIFTVNPRGE (203 aa)) form a C-LIP region. The DXDXT motif signature appears at 644 to 648 (DIDGT). An LXXIL motif motif is present at residues 655–659 (LGHIL).

It belongs to the lipin family. Mg(2+) serves as cofactor. Significant expression in intestine and other regions of the gastrointestinal tract.

The protein localises to the nucleus. It catalyses the reaction a 1,2-diacyl-sn-glycero-3-phosphate + H2O = a 1,2-diacyl-sn-glycerol + phosphate. Its activity is regulated as follows. Inhibited by N-ethylmaleimide. Magnesium-dependent phosphatidate phosphatase enzyme which catalyzes the conversion of phosphatidic acid to diacylglycerol during triglyceride, phosphatidylcholine and phosphatidylethanolamine biosynthesis therefore regulates fatty acid metabolism. The polypeptide is Phosphatidate phosphatase LPIN3 (Homo sapiens (Human)).